We begin with the raw amino-acid sequence, 334 residues long: Holliday junction branch migration complex subunit RuvB (334 aa).

Positions 4–184 (ADRLIQPQLQ…FGIPLRLEFY (181 aa)) are large ATPase domain (RuvB-L). ATP is bound by residues Arg24, Gly65, Lys68, Thr69, Thr70, 131 to 133 (EDY), Arg174, Tyr184, and Arg221. Thr69 lines the Mg(2+) pocket. The small ATPAse domain (RuvB-S) stretch occupies residues 185-255 (NVKDLSTIVT…VAEHALDLLD (71 aa)). The tract at residues 258–334 (GEGFDYMDRK…YLHFGMIKPE (77 aa)) is head domain (RuvB-H). DNA is bound by residues Arg294, Arg313, and Arg318.

The protein belongs to the RuvB family. Homohexamer. Forms an RuvA(8)-RuvB(12)-Holliday junction (HJ) complex. HJ DNA is sandwiched between 2 RuvA tetramers; dsDNA enters through RuvA and exits via RuvB. An RuvB hexamer assembles on each DNA strand where it exits the tetramer. Each RuvB hexamer is contacted by two RuvA subunits (via domain III) on 2 adjacent RuvB subunits; this complex drives branch migration. In the full resolvosome a probable DNA-RuvA(4)-RuvB(12)-RuvC(2) complex forms which resolves the HJ.

Its subcellular location is the cytoplasm. The enzyme catalyses ATP + H2O = ADP + phosphate + H(+). The RuvA-RuvB-RuvC complex processes Holliday junction (HJ) DNA during genetic recombination and DNA repair, while the RuvA-RuvB complex plays an important role in the rescue of blocked DNA replication forks via replication fork reversal (RFR). RuvA specifically binds to HJ cruciform DNA, conferring on it an open structure. The RuvB hexamer acts as an ATP-dependent pump, pulling dsDNA into and through the RuvAB complex. RuvB forms 2 homohexamers on either side of HJ DNA bound by 1 or 2 RuvA tetramers; 4 subunits per hexamer contact DNA at a time. Coordinated motions by a converter formed by DNA-disengaged RuvB subunits stimulates ATP hydrolysis and nucleotide exchange. Immobilization of the converter enables RuvB to convert the ATP-contained energy into a lever motion, pulling 2 nucleotides of DNA out of the RuvA tetramer per ATP hydrolyzed, thus driving DNA branch migration. The RuvB motors rotate together with the DNA substrate, which together with the progressing nucleotide cycle form the mechanistic basis for DNA recombination by continuous HJ branch migration. Branch migration allows RuvC to scan DNA until it finds its consensus sequence, where it cleaves and resolves cruciform DNA. The polypeptide is Holliday junction branch migration complex subunit RuvB (Shewanella sp. (strain MR-4)).